Here is a 227-residue protein sequence, read N- to C-terminus: 7-cyano-7-deazaguanine synthase (227 aa).

Position 8 to 18 (Leu8 to Leu18) interacts with ATP. Zn(2+)-binding residues include Cys191, Cys201, Cys204, and Cys207.

Belongs to the QueC family. Zn(2+) is required as a cofactor.

The enzyme catalyses 7-carboxy-7-deazaguanine + NH4(+) + ATP = 7-cyano-7-deazaguanine + ADP + phosphate + H2O + H(+). Its pathway is purine metabolism; 7-cyano-7-deazaguanine biosynthesis. Catalyzes the ATP-dependent conversion of 7-carboxy-7-deazaguanine (CDG) to 7-cyano-7-deazaguanine (preQ(0)). In Paramagnetospirillum magneticum (strain ATCC 700264 / AMB-1) (Magnetospirillum magneticum), this protein is 7-cyano-7-deazaguanine synthase.